The following is a 183-amino-acid chain: Dual-action ribosomal maturation protein DarP (183 aa).

The segment at 1 to 27 (MSSHSQEPVGEENFDDSEYDRPSKSQV) is disordered. The segment covering 9-18 (VGEENFDDSE) has biased composition (acidic residues).

It belongs to the DarP family.

It localises to the cytoplasm. Member of a network of 50S ribosomal subunit biogenesis factors which assembles along the 30S-50S interface, preventing incorrect 23S rRNA structures from forming. Promotes peptidyl transferase center (PTC) maturation. This Bordetella parapertussis (strain 12822 / ATCC BAA-587 / NCTC 13253) protein is Dual-action ribosomal maturation protein DarP.